Here is a 147-residue protein sequence, read N- to C-terminus: Lysozyme C, tracheal isozyme (147 aa).

The signal sequence occupies residues 1–18 (MKALLILGLLLLSVAVQG). Residues 19 to 147 (KTFKRCELAK…LTSYVKGCGV (129 aa)) form the C-type lysozyme domain. 4 cysteine pairs are disulfide-bonded: Cys-24-Cys-145, Cys-48-Cys-133, Cys-83-Cys-99, and Cys-95-Cys-113. Residues Glu-53 and Asp-71 contribute to the active site.

Belongs to the glycosyl hydrolase 22 family. In terms of assembly, monomer. As to expression, trachea.

The catalysed reaction is Hydrolysis of (1-&gt;4)-beta-linkages between N-acetylmuramic acid and N-acetyl-D-glucosamine residues in a peptidoglycan and between N-acetyl-D-glucosamine residues in chitodextrins.. In terms of biological role, lysozymes have primarily a bacteriolytic function; those in tissues and body fluids are associated with the monocyte-macrophage system and enhance the activity of immunoagents. The chain is Lysozyme C, tracheal isozyme from Bos taurus (Bovine).